The following is a 115-amino-acid chain: Androgen-binding protein homolog (115 aa).

The first 23 residues, 1 to 23 (MKGTLLLLALLVTGELGFQTTEA), serve as a signal peptide directing secretion.

Belongs to the secretoglobin family.

The protein resides in the secreted. In Mesocricetus auratus (Golden hamster), this protein is Androgen-binding protein homolog.